The sequence spans 393 residues: Formate-dependent phosphoribosylglycinamide formyltransferase (393 aa).

Residues 22 to 23 and E82 contribute to the N(1)-(5-phospho-beta-D-ribosyl)glycinamide site; that span reads EL. Residues R114, K155, 160–165, 195–198, and E203 each bind ATP; these read SSGKGQ and EGLV. The ATP-grasp domain occupies 119–308; it reads RLAAETLQLP…EFALHVRAFL (190 aa). E267 and E279 together coordinate Mg(2+). Residues D286, K355, and 362-363 each bind N(1)-(5-phospho-beta-D-ribosyl)glycinamide; that span reads RR.

Belongs to the PurK/PurT family. As to quaternary structure, homodimer.

The enzyme catalyses N(1)-(5-phospho-beta-D-ribosyl)glycinamide + formate + ATP = N(2)-formyl-N(1)-(5-phospho-beta-D-ribosyl)glycinamide + ADP + phosphate + H(+). Its pathway is purine metabolism; IMP biosynthesis via de novo pathway; N(2)-formyl-N(1)-(5-phospho-D-ribosyl)glycinamide from N(1)-(5-phospho-D-ribosyl)glycinamide (formate route): step 1/1. Its function is as follows. Involved in the de novo purine biosynthesis. Catalyzes the transfer of formate to 5-phospho-ribosyl-glycinamide (GAR), producing 5-phospho-ribosyl-N-formylglycinamide (FGAR). Formate is provided by PurU via hydrolysis of 10-formyl-tetrahydrofolate. The polypeptide is Formate-dependent phosphoribosylglycinamide formyltransferase (Yersinia pseudotuberculosis serotype IB (strain PB1/+)).